The chain runs to 2221 residues: Autophagy-related protein 2 (2221 aa).

Disordered regions lie at residues 108-135 (RHAG…PNPT), 148-181 (EERE…LGYG), 288-327 (FTAP…EEDT), 502-537 (PQPC…DELS), 575-606 (PEST…EDDD), 629-648 (DDSP…RSSS), 672-758 (SMDE…RRSP), 963-996 (SSAS…SERT), 1297-1318 (QPPH…PSKP), and 1495-1514 (DMPE…GAGH). Polar residues predominate over residues 157-171 (ISSQSQVLHRTSTSG). The span at 291–301 (PTSPESTSPES) shows a compositional bias: low complexity. The segment covering 302–312 (PLQPKPSPPPS) has biased composition (pro residues). A compositionally biased stretch (low complexity) spans 510–530 (TSPVTSVPPSEASSSSSTSGS). Composition is skewed to basic and acidic residues over residues 579–600 (VVRD…HMDP) and 632–644 (PEAH…KELS). Residues 741-756 (GSSQPSQSDGQAQSRR) are compositionally biased toward polar residues. Composition is skewed to basic and acidic residues over residues 971-986 (PKKE…HFEE) and 1298-1311 (PPHH…KGGR). Residues 1502–1511 (TTDSPDQNQG) are compositionally biased toward polar residues.

It belongs to the ATG2 family.

It localises to the preautophagosomal structure membrane. The protein localises to the endoplasmic reticulum membrane. It catalyses the reaction a 1,2-diacyl-sn-glycero-3-phosphocholine(in) = a 1,2-diacyl-sn-glycero-3-phosphocholine(out). It carries out the reaction a 1,2-diacyl-sn-glycero-3-phospho-L-serine(in) = a 1,2-diacyl-sn-glycero-3-phospho-L-serine(out). The enzyme catalyses a 1,2-diacyl-sn-glycero-3-phosphoethanolamine(in) = a 1,2-diacyl-sn-glycero-3-phosphoethanolamine(out). Lipid transfer protein required for autophagosome completion and peroxisome degradation. Tethers the edge of the isolation membrane (IM) to the endoplasmic reticulum (ER) and mediates direct lipid transfer from ER to IM for IM expansion. Atg2 binds to the ER exit site (ERES), which is the membrane source for autophagosome formation, using basic residues in its N-terminal region (NR) and to the expanding edge of the IM through its C-terminal region. The latter binding is assisted by an atg18-PtdIns3P interaction. Atg2 then extracts phospholipids from the membrane source using its NR and transfers them to atg9 to the IM through its predicted beta-sheet-rich structure for membrane expansion. The sequence is that of Autophagy-related protein 2 (atg2) from Aspergillus niger (strain ATCC MYA-4892 / CBS 513.88 / FGSC A1513).